Reading from the N-terminus, the 58-residue chain is SPbeta prophage-derived uncharacterized protein YonT (58 aa).

Residues glycine 6–valine 26 form a helical membrane-spanning segment. The disordered stretch occupies residues glycine 35–arginine 58. The segment covering threonine 36–arginine 58 has biased composition (basic residues).

The protein localises to the cell membrane. This is SPbeta prophage-derived uncharacterized protein YonT (yonT) from Bacillus subtilis (strain 168).